Consider the following 419-residue polypeptide: UDP-N-acetylglucosamine 1-carboxyvinyltransferase 2 (419 aa).

22 to 23 (KN) lines the phosphoenolpyruvate pocket. Arg92 serves as a coordination point for UDP-N-acetyl-alpha-D-glucosamine. Cys116 acts as the Proton donor in catalysis. A 2-(S-cysteinyl)pyruvic acid O-phosphothioketal modification is found at Cys116. UDP-N-acetyl-alpha-D-glucosamine contacts are provided by residues 121 to 125 (RPIDL), Asp306, and Ile328.

Belongs to the EPSP synthase family. MurA subfamily.

It is found in the cytoplasm. It carries out the reaction phosphoenolpyruvate + UDP-N-acetyl-alpha-D-glucosamine = UDP-N-acetyl-3-O-(1-carboxyvinyl)-alpha-D-glucosamine + phosphate. Its pathway is cell wall biogenesis; peptidoglycan biosynthesis. Its function is as follows. Cell wall formation. Adds enolpyruvyl to UDP-N-acetylglucosamine. In Streptococcus pyogenes serotype M1, this protein is UDP-N-acetylglucosamine 1-carboxyvinyltransferase 2.